A 269-amino-acid polypeptide reads, in one-letter code: Undecaprenyl-diphosphatase (269 aa).

7 helical membrane-spanning segments follow: residues glycine 40–phenylalanine 59, tryptophan 87–isoleucine 107, alanine 116–glycine 136, alanine 160–phenylalanine 180, phenylalanine 188–leucine 208, proline 220–leucine 240, and serine 247–phenylalanine 267.

Belongs to the UppP family.

It is found in the cell inner membrane. The enzyme catalyses di-trans,octa-cis-undecaprenyl diphosphate + H2O = di-trans,octa-cis-undecaprenyl phosphate + phosphate + H(+). Catalyzes the dephosphorylation of undecaprenyl diphosphate (UPP). Confers resistance to bacitracin. The chain is Undecaprenyl-diphosphatase from Geobacter metallireducens (strain ATCC 53774 / DSM 7210 / GS-15).